The primary structure comprises 461 residues: Calcitonin gene-related peptide type 1 receptor (461 aa).

A signal peptide spans 1 to 22; the sequence is MEKKCTLYFLVLLPFFMILVTA. Residues 23 to 139 are Extracellular-facing; it reads ELEESPEDSI…NTHEKVKTAL (117 aa). 3 cysteine pairs are disulfide-bonded: Cys-48–Cys-74, Cys-65–Cys-105, and Cys-88–Cys-127. Residues Asn-66, Asn-118, and Asn-123 are each glycosylated (N-linked (GlcNAc...) asparagine). The chain crosses the membrane as a helical span at residues 140-164; that stretch reads NLFYLTIIGHGLSIASLLISLGIFF. At 165–175 the chain is on the cytoplasmic side; that stretch reads YFKSLSCQRIT. The helical transmembrane segment at 176–198 threads the bilayer; the sequence is LHKNLFFSFVCNSVVTIIHLTAV. At 199-209 the chain is on the extracellular side; that stretch reads ANNQALVATNP. A helical transmembrane segment spans residues 210–238; that stretch reads VSCKVSQFIHLYLMGCNYFWMLCEGIYLH. Residues 239–252 lie on the Cytoplasmic side of the membrane; it reads TLIVVAVFAEKQHL. The helical transmembrane segment at 253–273 threads the bilayer; it reads MWYYFLGWGFPLIPACIHAIA. The Extracellular portion of the chain corresponds to 274–289; that stretch reads RSLYYNDNCWISSDTH. Residues 288 to 289 are required for RAMP3 interaction; it reads TH. A helical membrane pass occupies residues 290 to 314; the sequence is LLYIIHGPICAALLVNLFFLLNIVR. Topologically, residues 315–329 are cytoplasmic; it reads VLITKLKVTHQAESN. The helical transmembrane segment at 330–351 threads the bilayer; that stretch reads LYMKAVRATLILVPLLGIEFVL. Topologically, residues 352-366 are extracellular; sequence IPWRPEGKIAEEVYD. A helical membrane pass occupies residues 367 to 387; the sequence is YIMHILMHFQGLLVSTIFCFF. Phosphoserine occurs at positions 420 and 445.

The protein belongs to the G-protein coupled receptor 2 family. Heterodimer of CALCRL and RAMP1; the receptor complex functions as CGRP receptor. Heterodimer of CALCRL and RAMP2 or CALCRL and RAMP3; the complexes function as adrenomedullin receptor. Predominantly expressed in the lung and heart.

Its subcellular location is the cell membrane. Its function is as follows. G protein-coupled receptor which specificity is determined by its interaction with receptor-activity-modifying proteins (RAMPs). Together with RAMP1, form the receptor complex for calcitonin-gene-related peptides CALCA/CGRP1 and CALCB/CGRP2. Together with RAMP2 or RAMP3, function as receptor complexes for adrenomedullin (ADM and ADM2). Ligand binding causes a conformation change that triggers signaling via guanine nucleotide-binding proteins (G proteins) and modulates the activity of downstream effectors. Activates cAMP-dependent pathway. The sequence is that of Calcitonin gene-related peptide type 1 receptor from Homo sapiens (Human).